Consider the following 220-residue polypeptide: Cytidylate kinase (220 aa).

10–18 (GPASSGKST) contributes to the ATP binding site.

Belongs to the cytidylate kinase family. Type 1 subfamily.

It localises to the cytoplasm. It catalyses the reaction CMP + ATP = CDP + ADP. The enzyme catalyses dCMP + ATP = dCDP + ADP. In Lactococcus lactis subsp. lactis (strain IL1403) (Streptococcus lactis), this protein is Cytidylate kinase.